A 156-amino-acid polypeptide reads, in one-letter code: Cellulose synthase operon protein D (156 aa).

Its pathway is glycan metabolism; bacterial cellulose biosynthesis. May have a major role in the perfection of crystallization, involved either in the pore structure itself or in the organization of the pores within the linear array of terminal synthesizing complexes (TCs). In Komagataeibacter xylinus (Gluconacetobacter xylinus), this protein is Cellulose synthase operon protein D (acsD).